Reading from the N-terminus, the 394-residue chain is MKKVILSLALGTFGLGMAEFGIMGVLTELAHNVGISIPAAGHMISYYALGVVVGAPIIALFSSRYSLKHILLFLVALCVIGNAMFTLSSSYLMLAIGRLVSGFPHGAFFGVGAIVLSKIIKPGKVTAAVAGMVSGMTVANLLGIPLGTYLSQEFSWRYTFLLIAVFNIAVMASVYFWVPDIRDEAKGNLREQFHFLRSPAPWLIFAATMFGNAGVFAWFSYVKPYMMFISGFSETAMTFIMMLVGLGMVLGNMLSGRISGRYSPLRIAAVTDFIIVLALLMLFFCGGMKTTSLIFAFICCAGLFALSAPLQILLLQNAKGGELLGAAGGQIAFNLGSAVGAYCGGMMLTLGLAYNYVALPAALLSFAAMSSLLLYGRYKRQQAADTPVLAKPLG.

Over 1 to 4 the chain is Cytoplasmic; that stretch reads MKKV. A helical transmembrane segment spans residues 5-27; that stretch reads ILSLALGTFGLGMAEFGIMGVLT. Residues 28 to 41 lie on the Periplasmic side of the membrane; the sequence is ELAHNVGISIPAAG. The helical transmembrane segment at 42 to 63 threads the bilayer; the sequence is HMISYYALGVVVGAPIIALFSS. At 64–69 the chain is on the cytoplasmic side; the sequence is RYSLKH. The chain crosses the membrane as a helical span at residues 70–89; that stretch reads ILLFLVALCVIGNAMFTLSS. Residues 90-93 lie on the Periplasmic side of the membrane; that stretch reads SYLM. Residues 94–116 form a helical membrane-spanning segment; that stretch reads LAIGRLVSGFPHGAFFGVGAIVL. The Cytoplasmic segment spans residues 117-128; it reads SKIIKPGKVTAA. A helical membrane pass occupies residues 129–151; that stretch reads VAGMVSGMTVANLLGIPLGTYLS. Over 152 to 155 the chain is Periplasmic; the sequence is QEFS. A helical membrane pass occupies residues 156 to 178; sequence WRYTFLLIAVFNIAVMASVYFWV. At 179 to 198 the chain is on the cytoplasmic side; it reads PDIRDEAKGNLREQFHFLRS. Residues 199-221 form a helical membrane-spanning segment; sequence PAPWLIFAATMFGNAGVFAWFSY. The Periplasmic segment spans residues 222 to 235; it reads VKPYMMFISGFSET. A helical membrane pass occupies residues 236-255; it reads AMTFIMMLVGLGMVLGNMLS. The Cytoplasmic portion of the chain corresponds to 256 to 261; the sequence is GRISGR. The chain crosses the membrane as a helical span at residues 262–284; it reads YSPLRIAAVTDFIIVLALLMLFF. The Periplasmic segment spans residues 285–293; it reads CGGMKTTSL. Residues 294–316 form a helical membrane-spanning segment; sequence IFAFICCAGLFALSAPLQILLLQ. Over 317–322 the chain is Cytoplasmic; the sequence is NAKGGE. Residues 323-342 form a helical membrane-spanning segment; it reads LLGAAGGQIAFNLGSAVGAY. Residues 343 to 351 are Periplasmic-facing; it reads CGGMMLTLG. The chain crosses the membrane as a helical span at residues 352-374; the sequence is LAYNYVALPAALLSFAAMSSLLL. The Cytoplasmic segment spans residues 375-394; it reads YGRYKRQQAADTPVLAKPLG.

Belongs to the major facilitator superfamily.

Its subcellular location is the cell inner membrane. Functionally, may be involved in either the transport or processing of arabinose polymers. The polypeptide is Putative transporter AraJ (araJ) (Escherichia coli (strain K12)).